The chain runs to 338 residues: N-acetylmuramate/N-acetylglucosamine kinase (338 aa).

The protein belongs to the kinase AmgK family.

It carries out the reaction N-acetyl-D-muramate + ATP = N-acetyl-alpha-D-muramate 1-phosphate + ADP + H(+). It catalyses the reaction N-acetyl-D-glucosamine + ATP = N-acetyl-alpha-D-glucosamine 1-phosphate + ADP + H(+). It functions in the pathway cell wall biogenesis; peptidoglycan recycling. Functionally, sugar kinase that catalyzes the ATP-dependent phosphorylation of N-acetylmuramate (MurNAc) and N-acetylglucosamine (GlcNAc) at its C1 hydroxyl group, leading to MurNAc alpha-1P and GlcNAc alpha-1P, respectively. Is involved in peptidoglycan recycling as part of a cell wall recycling pathway that bypasses de novo biosynthesis of the peptidoglycan precursor UDP-MurNAc. Plays a role in intrinsic resistance to fosfomycin, which targets the de novo synthesis of UDP-MurNAc. This is N-acetylmuramate/N-acetylglucosamine kinase from Pseudomonas aeruginosa (strain ATCC 15692 / DSM 22644 / CIP 104116 / JCM 14847 / LMG 12228 / 1C / PRS 101 / PAO1).